Consider the following 1130-residue polypeptide: 3-hydroxy-3-methylglutaryl-coenzyme A reductase 1 (1130 aa).

The Cytoplasmic segment spans residues 1-46; the sequence is MATSLITRKLRSAEATNDVEPGWLKRQVTGVLQSISSHACQHPIHT. The chain crosses the membrane as a helical span at residues 47-67; that stretch reads IVVIALLASTTYVGLLEGSLF. Topologically, residues 68–242 are lumenal; sequence DSVRNSRNIA…DLIKHAETID (175 aa). Residue Asn148 is glycosylated (N-linked (GlcNAc...) asparagine). The SSD domain maps to 242–415; it reads DIVIMTLGYL…FTFYTTILCI (174 aa). Residues 243 to 263 form a helical membrane-spanning segment; it reads IVIMTLGYLSMHLSFVSLFFS. At 264–270 the chain is on the cytoplasmic side; the sequence is MRRLGSN. The chain crosses the membrane as a helical span at residues 271–291; sequence FWLAATVLFSGVFAFLFGLLV. Residues 292–296 are Lumenal-facing; the sequence is TTKLG. Residues 297 to 317 traverse the membrane as a helical segment; the sequence is VPINVLLLSEGLPFLVVTIGF. Topologically, residues 318 to 366 are cytoplasmic; sequence EKPIILTRAVLTAAADNRGRAGQASSSTTKSIQDSIQTAIKEQGFEIIR. A helical transmembrane segment spans residues 367 to 387; sequence DYCIEIAILIAGAASGVQGGL. At 388–389 the chain is on the lumenal side; that stretch reads RQ. The chain crosses the membrane as a helical span at residues 390–410; sequence FCFLAAWILFFDCVLLFTFYT. The Cytoplasmic segment spans residues 411–476; sequence TILCIKLEIN…RKLRSSSVRR (66 aa). A helical membrane pass occupies residues 477 to 497; that stretch reads FKILMVGGFVLVNVVNLSTIP. Residues 498-601 are Lumenal-facing; sequence FRDSSQGAGL…ESLLKSIEDP (104 aa). The helical transmembrane segment at 602-622 threads the bilayer; it reads IISKWIIAALTLSIILNGYLF. Topologically, residues 623-1130 are cytoplasmic; sequence NAARWSIKEP…ARGLTMSSSE (508 aa). Glu792 serves as the catalytic Charge relay system. 798-804 serves as a coordination point for CoA; sequence STSRGAK. NADP(+)-binding positions include 859-861 and 886-894; these read SRF and DAMGMNMIS. Lys926 (charge relay system) is an active-site residue. 955–957 serves as a coordination point for CoA; sequence VLK. The active-site Charge relay system is Asp1002. 1097–1098 is a CoA binding site; that stretch reads AH. His1098 serves as the catalytic Proton donor. 1102–1103 provides a ligand contact to NADP(+); it reads NR. A compositionally biased stretch (low complexity) spans 1103–1122; that stretch reads RSAATTRTSTPVSAAVSAAR. A disordered region spans residues 1103–1130; that stretch reads RSAATTRTSTPVSAAVSAARGLTMSSSE.

It belongs to the HMG-CoA reductase family.

Its subcellular location is the endoplasmic reticulum membrane. The catalysed reaction is (R)-mevalonate + 2 NADP(+) + CoA = (3S)-3-hydroxy-3-methylglutaryl-CoA + 2 NADPH + 2 H(+). Its pathway is metabolic intermediate biosynthesis; (R)-mevalonate biosynthesis; (R)-mevalonate from acetyl-CoA: step 3/3. Its function is as follows. HMG-CoA reductase; part of the first module of ergosterol biosynthesis pathway that includes the early steps of the pathway, conserved across all eukaryotes, and which results in the formation of mevalonate from acetyl-coenzyme A (acetyl-CoA). Hmg1 and hmg2 catalyze the reduction of hydroxymethylglutaryl-CoA (HMG-CoA) to mevalonate. The first module starts with the action of the cytosolic acetyl-CoA acetyltransferase erg10B that catalyzes the formation of acetoacetyl-CoA. The hydroxymethylglutaryl-CoA synthases erg13A and erg13B then condense acetyl-CoA with acetoacetyl-CoA to form HMG-CoA. The rate-limiting step of the early module is the reduction to mevalonate by the 3-hydroxy-3-methylglutaryl-coenzyme A (HMG-CoA) reductases hmg1 and hmg2. Mevalonate is also a precursor for the extracellular siderophore triacetylfusarinine C (TAFC). This Aspergillus fumigatus (strain ATCC MYA-4609 / CBS 101355 / FGSC A1100 / Af293) (Neosartorya fumigata) protein is 3-hydroxy-3-methylglutaryl-coenzyme A reductase 1.